The following is a 673-amino-acid chain: MSIILLDPRTINRIAAGEVIECPASVVKELVENSIDAKATAISITIERGGRNLIIVSDNGIGIKKEDMEIAFARHATSKLPDGDLTKVRSLGFRGEGLTSIAAVGKVKMVSKYRDSDTAWLMVFEGGEKTQELTPDALSCGTYIEVRDLFFATPNRLKFLRTEKAEVQSIIDMMNKLAMVNHNVMFSLFVDNKQVFKYLTQQSNIDRLSEIKTLGMEFCKNSLPVNVKEEQIQLSGYIGSPTLSRGKSSLIYTFVNSRPVYDNLLIGAVRYAYSDFIEKDKYPVVVLYLDIPCDQVDANVHPNKSEVRFQDKKLVYRTVVNAIKEVLSINLNTKLKSISEFENDHFVHASMVNSRNIGNSVSSEFFKCFQNRKPLLNNDVQKYSSKNVETDDQSLLDTNVSFCTDSKMITNKLKEERVYENSREHINKGDSKIEVSNFDILGEKKNFVNLANNLLQESPSIDSGKFNTSKKVPSDSLIDTYPLGYALCQIHSRYIISQTQDSIVIIDQHAAHERLTYEYMKQVMAKEGIKRQILLIPEIIEMNNHLDLELLVEYKEKLLKLGLLIEPLGNLSVIVREVPALFGSFDVKSLIINIVDSIMEVGDTLFLDDKIKDICGTIACYSSIRSGRKLKIEEMNAILRNMENTAHSGQCNHGRPTYVELNLVEIDRLFSRR.

The protein belongs to the DNA mismatch repair MutL/HexB family.

This protein is involved in the repair of mismatches in DNA. It is required for dam-dependent methyl-directed DNA mismatch repair. May act as a 'molecular matchmaker', a protein that promotes the formation of a stable complex between two or more DNA-binding proteins in an ATP-dependent manner without itself being part of a final effector complex. The chain is DNA mismatch repair protein MutL from Ehrlichia chaffeensis (strain ATCC CRL-10679 / Arkansas).